Here is a 428-residue protein sequence, read N- to C-terminus: Enolase (428 aa).

Q162 serves as a coordination point for (2R)-2-phosphoglycerate. E204 (proton donor) is an active-site residue. Residues D241, E286, and D313 each coordinate Mg(2+). K338, R367, S368, and K389 together coordinate (2R)-2-phosphoglycerate. K338 (proton acceptor) is an active-site residue.

This sequence belongs to the enolase family. Component of the RNA degradosome, a multiprotein complex involved in RNA processing and mRNA degradation. The cofactor is Mg(2+).

It localises to the cytoplasm. Its subcellular location is the secreted. The protein resides in the cell surface. The enzyme catalyses (2R)-2-phosphoglycerate = phosphoenolpyruvate + H2O. Its pathway is carbohydrate degradation; glycolysis; pyruvate from D-glyceraldehyde 3-phosphate: step 4/5. Its function is as follows. Catalyzes the reversible conversion of 2-phosphoglycerate (2-PG) into phosphoenolpyruvate (PEP). It is essential for the degradation of carbohydrates via glycolysis. This is Enolase from Vesicomyosocius okutanii subsp. Calyptogena okutanii (strain HA).